Consider the following 121-residue polypeptide: Large ribosomal subunit protein bL12 (121 aa).

This sequence belongs to the bacterial ribosomal protein bL12 family. In terms of assembly, homodimer. Part of the ribosomal stalk of the 50S ribosomal subunit. Forms a multimeric L10(L12)X complex, where L10 forms an elongated spine to which 2 to 4 L12 dimers bind in a sequential fashion. Binds GTP-bound translation factors.

Forms part of the ribosomal stalk which helps the ribosome interact with GTP-bound translation factors. Is thus essential for accurate translation. This is Large ribosomal subunit protein bL12 from Anoxybacillus flavithermus (strain DSM 21510 / WK1).